Reading from the N-terminus, the 172-residue chain is Bifunctional protein PyrR (172 aa).

Substrate contacts are provided by residues 36 to 37 (TG), arginine 77, 94 to 102 (DDVLMSGRT), and valine 151. The short motif at 90-102 (LVLVDDVLMSGRT) is the PRPP-binding element.

Belongs to the purine/pyrimidine phosphoribosyltransferase family. PyrR subfamily.

It catalyses the reaction UMP + diphosphate = 5-phospho-alpha-D-ribose 1-diphosphate + uracil. In terms of biological role, regulates the transcription of the pyrimidine nucleotide (pyr) operon in response to exogenous pyrimidines. Also displays a weak uracil phosphoribosyltransferase activity which is not physiologically significant. This Pseudomonas putida (Arthrobacter siderocapsulatus) protein is Bifunctional protein PyrR.